We begin with the raw amino-acid sequence, 247 residues long: 6-carboxyhexanoate--CoA ligase (247 aa).

Belongs to the BioW family. In terms of assembly, homodimer. The cofactor is Mg(2+).

The catalysed reaction is heptanedioate + ATP + CoA = 6-carboxyhexanoyl-CoA + AMP + diphosphate. The protein operates within metabolic intermediate metabolism; pimeloyl-CoA biosynthesis; pimeloyl-CoA from pimelate: step 1/1. Catalyzes the transformation of pimelate into pimeloyl-CoA with concomitant hydrolysis of ATP to AMP. The chain is 6-carboxyhexanoate--CoA ligase from Persephonella marina (strain DSM 14350 / EX-H1).